The sequence spans 355 residues: MGCAMSNAADKEAAERSKKIDKDLRLAGERAAREVKLLLLGAGESGKSTIVKQMKIIHETGYSREECEQYRPVVYSNTIQSLMAIIRAMGQLKIDFRDSSRADDARHFFTLASAADEGELTPELANIMKRLWNESGVQHCRNRSREYQLNDTAAYYLNALDRIARPGYIPTQQDVLRTRVKTTGIVETNFSFKNLNFKLFDVGGQRSERKKWIHCFEGVTAIIFVVALSGYDLVLAEDEEMNRMIESMKLFDSICNNKWFVETSIILFLNKKDLFEQKITKSPLTICFPEYQGSNVYEDSANYIRMKFENLNKRKDQKEIYTHFTCATDTNNIQFVFDAVTDVIIKNNLKDCGLF.

The N-myristoyl glycine moiety is linked to residue G2. C3 carries S-palmitoyl cysteine lipidation. Residues 33-355 (REVKLLLLGA…KNNLKDCGLF (323 aa)) form the G-alpha domain. The interval 36–49 (KLLLLGAGESGKST) is G1 motif. GTP is bound by residues 41–48 (GAGESGKS), 176–182 (LRTRVKT), 201–205 (DVGGQ), 270–273 (NKKD), and A327. The Mg(2+) site is built by S48 and T182. The tract at residues 174–182 (DVLRTRVKT) is G2 motif. A G3 motif region spans residues 197–206 (FKLFDVGGQR). Residues 266–273 (ILFLNKKD) are G4 motif. The G5 motif stretch occupies residues 325–330 (TCATDT).

It belongs to the G-alpha family. G(i/o/t/z) subfamily. G proteins are composed of 3 units; alpha, beta and gamma. The alpha chain contains the guanine nucleotide binding site.

Guanine nucleotide-binding proteins (G proteins) are involved as modulators or transducers in various transmembrane signaling systems. The sequence is that of Guanine nucleotide-binding protein G(i) subunit alpha from Homarus americanus (American lobster).